Reading from the N-terminus, the 74-residue chain is QVFDQACKGIYDRAIFKKLELVCDDCYNLYRKPKVATTCRENCYANSVFRQCLDDLLLINVVDEYISGVQIVGK.

At Q1 the chain carries Pyrrolidone carboxylic acid. 3 disulfide bridges follow: C7–C43, C23–C39, and C26–C52. V72 carries the valine amide modification.

It localises to the secreted. Its function is as follows. Inhibits Y-organs where molting hormone (ecdysteroid) is secreted. A molting cycle is initiated when MIH secretion diminishes or stops. This Procambarus bouvieri (Mexican crayfish) protein is Molt-inhibiting hormone.